The primary structure comprises 98 residues: Integration host factor subunit beta (98 aa).

The protein belongs to the bacterial histone-like protein family. In terms of assembly, heterodimer of an alpha and a beta chain.

In terms of biological role, this protein is one of the two subunits of integration host factor, a specific DNA-binding protein that functions in genetic recombination as well as in transcriptional and translational control. The polypeptide is Integration host factor subunit beta (Pseudomonas entomophila (strain L48)).